The primary structure comprises 357 residues: Scopoletin 8-hydroxylase (357 aa).

Residues 206 to 307 (MGTKMVNMNY…RVSVPIFTAP (102 aa)) form the Fe2OG dioxygenase domain. Residue Tyr216 participates in 2-oxoglutarate binding. Fe cation is bound by residues His231, Asp233, and His288. 2-oxoglutarate is bound by residues Arg298 and Ser300.

This sequence belongs to the iron/ascorbate-dependent oxidoreductase family. L-ascorbate serves as cofactor. It depends on Fe(2+) as a cofactor. Expressed in both primary and lateral roots under iron-deficient conditions, except in apical root zones, and mostly in the root epidermal layer.

The catalysed reaction is scopoletin + 2-oxoglutarate + O2 = fraxetin + succinate + CO2. It functions in the pathway phenylpropanoid metabolism. Its function is as follows. Involved in the pathway of sideretin biosynthesis from feruloyl CoA, a redox-active catecholic metabolite exuded by roots in response to iron deficiency in order to facilitate the uptake of iron; this pathway consists in the successive conversion from feruloyl CoA to scopoletin, from scopoletin to fraxetin and from fraxetin to sideretin. Catalyzes the biosynthesis of fraxetin via scopoletin hydroxylation. The chain is Scopoletin 8-hydroxylase from Arabidopsis thaliana (Mouse-ear cress).